Consider the following 272-residue polypeptide: 2-dehydro-3-deoxyphosphooctonate aldolase (272 aa).

This sequence belongs to the KdsA family.

It localises to the cytoplasm. It catalyses the reaction D-arabinose 5-phosphate + phosphoenolpyruvate + H2O = 3-deoxy-alpha-D-manno-2-octulosonate-8-phosphate + phosphate. The protein operates within carbohydrate biosynthesis; 3-deoxy-D-manno-octulosonate biosynthesis; 3-deoxy-D-manno-octulosonate from D-ribulose 5-phosphate: step 2/3. Its pathway is bacterial outer membrane biogenesis; lipopolysaccharide biosynthesis. This is 2-dehydro-3-deoxyphosphooctonate aldolase from Geobacter metallireducens (strain ATCC 53774 / DSM 7210 / GS-15).